We begin with the raw amino-acid sequence, 196 residues long: Putative NADH dehydrogenase/NAD(P)H nitroreductase Smlt0482 (196 aa).

It belongs to the nitroreductase family. HadB/RutE subfamily. The cofactor is FMN.

In Stenotrophomonas maltophilia (strain K279a), this protein is Putative NADH dehydrogenase/NAD(P)H nitroreductase Smlt0482.